We begin with the raw amino-acid sequence, 220 residues long: Urease accessory protein UreG (220 aa).

Residue 18–25 coordinates GTP; sequence GPVGSGKT.

The protein belongs to the SIMIBI class G3E GTPase family. UreG subfamily. In terms of assembly, homodimer. UreD, UreF and UreG form a complex that acts as a GTP-hydrolysis-dependent molecular chaperone, activating the urease apoprotein by helping to assemble the nickel containing metallocenter of UreC. The UreE protein probably delivers the nickel.

Its subcellular location is the cytoplasm. In terms of biological role, facilitates the functional incorporation of the urease nickel metallocenter. This process requires GTP hydrolysis, probably effectuated by UreG. In Yersinia pestis, this protein is Urease accessory protein UreG.